A 318-amino-acid polypeptide reads, in one-letter code: Beta-galactosidase small subunit (318 aa).

Belongs to the bacterial beta-galactosidase small subunit family. As to quaternary structure, heterodimer of a large (LacL) and a small subunit (LacM).

The catalysed reaction is Hydrolysis of terminal non-reducing beta-D-galactose residues in beta-D-galactosides.. Its function is as follows. Component of a beta-galactosidase. The protein is Beta-galactosidase small subunit of Latilactobacillus sakei (Lactobacillus sakei).